The chain runs to 141 residues: Galactose-6-phosphate isomerase subunit LacA (141 aa).

Belongs to the LacAB/RpiB family. In terms of assembly, heteromultimeric protein consisting of LacA and LacB.

The enzyme catalyses aldehydo-D-galactose 6-phosphate = keto-D-tagatose 6-phosphate. It functions in the pathway carbohydrate metabolism; D-galactose 6-phosphate degradation; D-tagatose 6-phosphate from D-galactose 6-phosphate: step 1/1. The sequence is that of Galactose-6-phosphate isomerase subunit LacA from Streptococcus pneumoniae serotype 4 (strain ATCC BAA-334 / TIGR4).